The sequence spans 362 residues: MAHHDPINLMTPPAGLAQLNERSREIFRQIVESYLATGEPVGSRNISRLIAVPLSPASVRNVMADLEQLGLIYAPHTSAGRLPTEAGLRFFVDALMQVGDMTEAERQSIQSQLAAVGRAQSVEAALDEALTRLSGLTRAAAVVLTAKSNTRLKHIEFVRLEPEQALVVLVGEDGQVENRVLTLPPGVPSSALTEASNFLNARIRGRTLAEARLELETALAQDRAELDQLTQKVIAAGVASWSGGDSDDRQLIVRGHANLLEDLHALDDLERVRRLFDDLETKRGVVDLLGRAESAEGVRIFIGSENKLFSLSGSSTIVSPYSDATGRIVGVLGVIGPTRLNYARVIPTVDYAARLLSRLMGG.

This sequence belongs to the HrcA family.

Its function is as follows. Negative regulator of class I heat shock genes (grpE-dnaK-dnaJ and groELS operons). Prevents heat-shock induction of these operons. This Bradyrhizobium sp. (strain ORS 278) protein is Heat-inducible transcription repressor HrcA.